The following is a 197-amino-acid chain: RFKKIRRLGALPGLTSKRPRSGSDLKNQLRSGKRSQYRIRLEEKQKLRFHYGLTERQLLKYVHIAGKAKGSTGQILLQLLEMRLDNILFRLGMASTIPGARQLVNHRHILVNGRIVDIPSYRCKPRDIITTKNKQRSKALIQNFIASSPHQEELPNHLTIDPFQYKGLVNQIIDSKWIGLKINELLVVEYYSRQTDL.

In terms of domain architecture, S4 RNA-binding spans 82-143 (MRLDNILFRL…KQRSKALIQN (62 aa)).

It belongs to the universal ribosomal protein uS4 family. In terms of assembly, part of the 30S ribosomal subunit. Contacts protein S5. The interaction surface between S4 and S5 is involved in control of translational fidelity.

Its subcellular location is the plastid. The protein resides in the chloroplast. One of the primary rRNA binding proteins, it binds directly to 16S rRNA where it nucleates assembly of the body of the 30S subunit. In terms of biological role, with S5 and S12 plays an important role in translational accuracy. This chain is Small ribosomal subunit protein uS4c (rps4), found in Gladiolus papilio (Goldblotch gladiolus).